A 542-amino-acid chain; its full sequence is Prolyl 3-hydroxylase OGFOD1 (542 aa).

Residues 134 to 239 (DLESTIDMSC…RLSISGWFHG (106 aa)) enclose the Fe2OG dioxygenase domain. Fe cation contacts are provided by histidine 155 and aspartate 157. Tyrosine 169 provides a ligand contact to 2-oxoglutarate. Histidine 218 serves as a coordination point for Fe cation. Residue arginine 230 coordinates 2-oxoglutarate. Residues 373–435 (EDEMNDKKEA…TKKESSVPTC (63 aa)) form a disordered region. Over residues 400–416 (ENNQTAISNNSQQSNEQ) the composition is skewed to polar residues.

Belongs to the TPA1 family. As to quaternary structure, monomer. Fe(2+) is required as a cofactor. It depends on L-ascorbate as a cofactor.

Its subcellular location is the cytoplasm. The protein localises to the nucleus. It carries out the reaction [ribosomal protein uS12]-L-proline + 2-oxoglutarate + O2 = [ribosomal protein uS12]-(3S)-3-hydroxy-L-proline + succinate + CO2. Functionally, prolyl 3-hydroxylase that catalyzes 3-hydroxylation of 'Pro-62' of small ribosomal subunit uS12 (RPS23), thereby regulating protein translation termination efficiency. Involved in stress granule formation. The protein is Prolyl 3-hydroxylase OGFOD1 (OGFOD1) of Pongo abelii (Sumatran orangutan).